A 525-amino-acid chain; its full sequence is Retinoblastoma-binding-like protein E (525 aa).

WD repeat units follow at residues 25 to 66 (PKNI…IVRT), 69 to 108 (HHTG…ILYS), 222 to 261 (SSNT…LYQQ), 267 to 312 (DSVN…KDLE), and 313 to 352 (GPKE…NWSS). Disordered stretches follow at residues 371 to 398 (DEFD…RNPY) and 462 to 525 (EKYQ…KKRK). Positions 383–392 (QEVNNNNNNN) are enriched in low complexity. The segment covering 462-471 (EKYQKDKEDS) has biased composition (basic and acidic residues). A compositionally biased stretch (low complexity) spans 472 to 500 (SSTTSNSTISSSSSPSPSSSSTTTTTTTS). Positions 501 to 525 (QKKDETQKKEKSTKKERNSDSKKRK) are enriched in basic and acidic residues.

Its subcellular location is the nucleus. Its function is as follows. Involved in mono-, di- and trimethylation at 'Lys-4' of histone H3. Histone H3 'Lys-4' methylation represents a specific tag for epigenetic transcriptional activation. The sequence is that of Retinoblastoma-binding-like protein E from Dictyostelium discoideum (Social amoeba).